Consider the following 251-residue polypeptide: tRNA-uridine aminocarboxypropyltransferase 2 (251 aa).

Residues Cys23, Cys26, Cys33, and Cys35 each contribute to the Zn(2+) site. The short motif at 131–134 (DGTW) is the DXTW element.

The protein belongs to the TDD superfamily. DTWD2 family.

The enzyme catalyses a uridine in tRNA + S-adenosyl-L-methionine = a 3-[(3S)-3-amino-3-carboxypropyl]uridine in tRNA + S-methyl-5'-thioadenosine + H(+). Its function is as follows. Catalyzes the formation of 3-(3-amino-3-carboxypropyl)uridine (acp3U) at position 20a in the D-loop of several cytoplasmic tRNAs (acp3U(20a)). This Drosophila melanogaster (Fruit fly) protein is tRNA-uridine aminocarboxypropyltransferase 2.